Reading from the N-terminus, the 70-residue chain is MLDPFCFLKMYLKERVEVKTKSGEAYTGTLEGFDEHINLMLTCSSVEGSEDKVLFLRGENILFVGPRLLL.

The region spanning 3–70 (DPFCFLKMYL…ILFVGPRLLL (68 aa)) is the Sm domain.

This sequence belongs to the snRNP Sm proteins family.

Its subcellular location is the nucleus. In terms of biological role, binds specifically to the 3'-terminal U-tract of U6 snRNA. This chain is Probable U6 snRNA-associated Sm-like protein, found in Encephalitozoon cuniculi (strain GB-M1) (Microsporidian parasite).